We begin with the raw amino-acid sequence, 398 residues long: Exodeoxyribonuclease 7 large subunit (398 aa).

Belongs to the XseA family. As to quaternary structure, heterooligomer composed of large and small subunits.

It localises to the cytoplasm. It carries out the reaction Exonucleolytic cleavage in either 5'- to 3'- or 3'- to 5'-direction to yield nucleoside 5'-phosphates.. Its function is as follows. Bidirectionally degrades single-stranded DNA into large acid-insoluble oligonucleotides, which are then degraded further into small acid-soluble oligonucleotides. The polypeptide is Exodeoxyribonuclease 7 large subunit (Anaplasma phagocytophilum (strain HZ)).